The sequence spans 152 residues: MICSICKKGETSVVDSRPTEDGTAIRRRRLCVCGARFTTFERVQFREIMVVKKNGRKSSFDRDKLSKSIYIALKKRPIDTETAEKFISRTSRALEELGQSEISSNTIGTMVMEGLKDLDPVAYVRFASVYRNFREEKDFVQFVDKLDVYKKR.

A zinc finger lies at 3–33; sequence CSICKKGETSVVDSRPTEDGTAIRRRRLCVC. The ATP-cone domain occupies 48 to 138; that stretch reads IMVVKKNGRK…VYRNFREEKD (91 aa).

The protein belongs to the NrdR family. Zn(2+) is required as a cofactor.

Its function is as follows. Negatively regulates transcription of bacterial ribonucleotide reductase nrd genes and operons by binding to NrdR-boxes. This is Transcriptional repressor NrdR from Pelagibacter ubique (strain HTCC1062).